We begin with the raw amino-acid sequence, 343 residues long: Phosphatidylglycerol--prolipoprotein diacylglyceryl transferase (343 aa).

A run of 4 helical transmembrane segments spans residues 22–42 (IPIRAYALCIIAGIVAALIIG), 54–74 (GVIYDIALWAVPFGLVGGRLY), 97–117 (VWEGGLGIWGAVALGGVGAWI), and 123–143 (GIPLPAFADAIAPGIVLAQAI). Arg145 serves as a coordination point for a 1,2-diacyl-sn-glycero-3-phospho-(1'-sn-glycerol). 2 helical membrane passes run 193 to 213 (VVHPTFLYELLWNVLVFVLLI) and 257 to 277 (VNSFTSTLVFVGAVAYILLAP). Residues 283-343 (PATLGGTPSS…SADNSGIVEK (61 aa)) form a disordered region. The segment covering 295–325 (GGDDTAETEATADTEDTEDTEDGVTDAPEAD) has biased composition (acidic residues).

The protein belongs to the Lgt family.

The protein localises to the cell membrane. It catalyses the reaction L-cysteinyl-[prolipoprotein] + a 1,2-diacyl-sn-glycero-3-phospho-(1'-sn-glycerol) = an S-1,2-diacyl-sn-glyceryl-L-cysteinyl-[prolipoprotein] + sn-glycerol 1-phosphate + H(+). It functions in the pathway protein modification; lipoprotein biosynthesis (diacylglyceryl transfer). Its function is as follows. Catalyzes the transfer of the diacylglyceryl group from phosphatidylglycerol to the sulfhydryl group of the N-terminal cysteine of a prolipoprotein, the first step in the formation of mature lipoproteins. This Mycobacteroides abscessus (strain ATCC 19977 / DSM 44196 / CCUG 20993 / CIP 104536 / JCM 13569 / NCTC 13031 / TMC 1543 / L948) (Mycobacterium abscessus) protein is Phosphatidylglycerol--prolipoprotein diacylglyceryl transferase.